A 252-amino-acid chain; its full sequence is Probable transcriptional regulatory protein Kole_1935 (252 aa).

The protein belongs to the TACO1 family.

The protein resides in the cytoplasm. This chain is Probable transcriptional regulatory protein Kole_1935, found in Kosmotoga olearia (strain ATCC BAA-1733 / DSM 21960 / TBF 19.5.1).